The primary structure comprises 651 residues: Nucleolin (651 aa).

Over residues 1-11 (MVKLAKGAKTQ) the composition is skewed to low complexity. Positions 1–230 (MVKLAKGAKT…AKKTKTDTAS (230 aa)) are disordered. The segment covering 26–45 (EDSEEEEDMEEDDSSDEEVE) has biased composition (acidic residues). The segment covering 54 to 79 (KKTATPAKATPGKAATPGKKGATPAK) has biased composition (low complexity). Positions 89 to 101 (SEEEEDDSDEEAE) are enriched in acidic residues. Basic residues predominate over residues 106-116 (IKNKPVAKKAV). Acidic residues-rich tracts occupy residues 122 to 134 (SEED…ESEE), 155 to 168 (SEEE…DEPM), and 183 to 204 (AEED…EEEQ). Phosphoserine is present on serine 155. The span at 219-228 (PEAKKTKTDT) shows a compositional bias: basic and acidic residues. RRM domains lie at 233 to 309 (LSIF…KAMA), 325 to 399 (RTLF…FTGE), 415 to 488 (KVLV…FSQG), and 503 to 578 (KTLF…FAKP). Residues 574–651 (DFAKPKGDSQ…GQGKKMRFDD (78 aa)) are disordered. Residues 585–644 (GGRGGFGRGGGFRGGRGGRGGGGGRGFGGRGGGRGRGGFGGRGGGGFRGGQGGGFRGGQG) are compositionally biased toward gly residues.

It localises to the nucleus. Its subcellular location is the nucleolus. In terms of biological role, nucleolin is the major nucleolar protein of growing eukaryotic cells. It is found associated with intranucleolar chromatin and pre-ribosomal particles. It induces chromatin decondensation by binding to histone H1. It is thought to play a role in pre-rRNA transcription and ribosome assembly. The protein is Nucleolin (ncl) of Xenopus laevis (African clawed frog).